A 160-amino-acid polypeptide reads, in one-letter code: Small ribosomal subunit protein uS7A (160 aa).

It belongs to the universal ribosomal protein uS7 family. In terms of assembly, part of the 30S ribosomal subunit. Contacts proteins S9 and S11.

Functionally, one of the primary rRNA binding proteins, it binds directly to 16S rRNA where it nucleates assembly of the head domain of the 30S subunit. Is located at the subunit interface close to the decoding center, probably blocks exit of the E-site tRNA. The sequence is that of Small ribosomal subunit protein uS7A from Aquifex aeolicus (strain VF5).